The primary structure comprises 299 residues: Delta-9 desaturase-like 3 protein (299 aa).

Transmembrane regions (helical) follow at residues 38–57 (AVGA…TWEA) and 58–76 (FRFA…TFSY). A Histidine box-1 motif is present at residues 77–82 (HRNLTH). The Histidine box-2 signature appears at 114-118 (HRFHH). The next 2 membrane-spanning stretches (helical) occupy residues 174–194 (IGLH…LPYL) and 198–218 (VGVG…ACHI). The Histidine box-3 signature appears at 246–250 (HNNHH). A helical membrane pass occupies residues 262 to 282 (WYQVDLTWYLIWFFQVLGLAT).

Belongs to the fatty acid desaturase type 1 family. Fe cation is required as a cofactor.

It is found in the endoplasmic reticulum membrane. Its pathway is lipid metabolism; polyunsaturated fatty acid biosynthesis. The protein is Delta-9 desaturase-like 3 protein of Arabidopsis thaliana (Mouse-ear cress).